A 605-amino-acid chain; its full sequence is Adenine deaminase (605 aa).

Belongs to the metallo-dependent hydrolases superfamily. Adenine deaminase family. Mn(2+) serves as cofactor.

The enzyme catalyses adenine + H2O + H(+) = hypoxanthine + NH4(+). In Staphylothermus marinus (strain ATCC 43588 / DSM 3639 / JCM 9404 / F1), this protein is Adenine deaminase.